Consider the following 419-residue polypeptide: NFATC2-interacting protein (419 aa).

Disordered stretches follow at residues 1–131 (MAEP…GKVK) and 151–215 (DEEE…HTRA). Over residues 11–27 (WSGGSGAGRGGRGGWGG) the composition is skewed to gly residues. A compositionally biased stretch (low complexity) spans 35–51 (QRSPSRGTLDVVSVDLV). Phosphoserine is present on residues Ser54, Ser84, Ser88, Ser90, Ser92, and Ser127. Residues Lys129 and Lys131 each participate in a glycyl lysine isopeptide (Lys-Gly) (interchain with G-Cter in SUMO2) cross-link. Basic and acidic residues predominate over residues 180 to 192 (RTKDKEEKKKTEF). Phosphoserine is present on residues Ser198, Ser201, Ser204, Ser220, and Ser314. Residues 209-231 (SRTHTRALKKLSEVNKRLQDLRS) are a coiled coil. A phosphothreonine mark is found at Thr316 and Thr318. In terms of domain architecture, Ubiquitin-like spans 348-419 (LQLRVQGKEK…ESGDLIEVWG (72 aa)). 2 positions are modified to phosphoserine: Ser369 and Ser390.

As to quaternary structure, interacts with NFATC2, TRAF1, TRAF2 and PRMT1. Interacts with UBE2I/UBC9. Methylation at the N-terminus by PRMT1 modulates interaction with the NFAT complex and results in augmented cytokine production.

The protein resides in the nucleus. Its subcellular location is the cytoplasm. In T-helper 2 (Th2) cells, regulates the magnitude of NFAT-driven transcription of a specific subset of cytokine genes, including IL3, IL4, IL5 and IL13, but not IL2. Recruits PRMT1 to the IL4 promoter; this leads to enhancement of histone H4 'Arg-3'-methylation and facilitates subsequent histone acetylation at the IL4 locus, thus promotes robust cytokine expression. Down-regulates formation of poly-SUMO chains by UBE2I/UBC9. The sequence is that of NFATC2-interacting protein (NFATC2IP) from Homo sapiens (Human).